Here is a 349-residue protein sequence, read N- to C-terminus: MPMPPDDSPLSLLPDHPLAAHNTFGIAATARYAARITHAAQFEALHRDPRVASLPQLVLGGGSNVVFTRDFDGVVLLDEIGGRRVVREDDDAWYVEAGGGEPWHAFVAWTLEQGMPGLENLALIPGTVGAAPIQNIGAYGLEMKAYFDSLIAVELATGRSERFDAARCAFGYRDSFFKRDGRGRFAIVAVTFRLPKRWTPRLGYADVTRELDARGIAPDAATPRDVFDAVVAIRRAKLPDPRVLGNAGSFFKNPVIDAAQFDALRARAPDVVSYPQPDGQVKLAAGWLIDQCGWKGRALGAAAVHERQALVLVNRGGATGVDVLALARAIQHDVRVRFGVELEPEPVCL.

One can recognise an FAD-binding PCMH-type domain in the interval 25-197; sequence GIAATARYAA…VAVTFRLPKR (173 aa). Residue arginine 173 is part of the active site. Serine 249 acts as the Proton donor in catalysis. The active site involves glutamate 345.

It belongs to the MurB family. FAD is required as a cofactor.

The protein localises to the cytoplasm. The catalysed reaction is UDP-N-acetyl-alpha-D-muramate + NADP(+) = UDP-N-acetyl-3-O-(1-carboxyvinyl)-alpha-D-glucosamine + NADPH + H(+). It functions in the pathway cell wall biogenesis; peptidoglycan biosynthesis. Functionally, cell wall formation. The polypeptide is UDP-N-acetylenolpyruvoylglucosamine reductase (Burkholderia vietnamiensis (strain G4 / LMG 22486) (Burkholderia cepacia (strain R1808))).